A 300-amino-acid chain; its full sequence is tRNA pseudouridine synthase B (300 aa).

The active-site Nucleophile is the Asp-38.

This sequence belongs to the pseudouridine synthase TruB family. Type 1 subfamily.

It carries out the reaction uridine(55) in tRNA = pseudouridine(55) in tRNA. Responsible for synthesis of pseudouridine from uracil-55 in the psi GC loop of transfer RNAs. This Dehalococcoides mccartyi (strain ATCC BAA-2266 / KCTC 15142 / 195) (Dehalococcoides ethenogenes (strain 195)) protein is tRNA pseudouridine synthase B.